We begin with the raw amino-acid sequence, 387 residues long: Transcription termination/antitermination protein NusA (387 aa).

The S1 motif domain occupies 145–209; sequence GQVLTGVVTR…AKGPSLLVSR (65 aa). A KH domain is found at 312–379; it reads AKKARVKVTK…ARERKAREEF (68 aa).

The protein belongs to the NusA family. As to quaternary structure, monomer. Binds directly to the core enzyme of the DNA-dependent RNA polymerase and to nascent RNA.

Its subcellular location is the cytoplasm. In terms of biological role, participates in both transcription termination and antitermination. The chain is Transcription termination/antitermination protein NusA from Thermus thermophilus (strain ATCC 27634 / DSM 579 / HB8).